The following is a 290-amino-acid chain: 4-diphosphocytidyl-2-C-methyl-D-erythritol kinase (290 aa).

Lys-20 is a catalytic residue. 104-114 (PMGGGLGGGSS) is an ATP binding site. Asp-146 is a catalytic residue.

Belongs to the GHMP kinase family. IspE subfamily.

It carries out the reaction 4-CDP-2-C-methyl-D-erythritol + ATP = 4-CDP-2-C-methyl-D-erythritol 2-phosphate + ADP + H(+). Its pathway is isoprenoid biosynthesis; isopentenyl diphosphate biosynthesis via DXP pathway; isopentenyl diphosphate from 1-deoxy-D-xylulose 5-phosphate: step 3/6. Its function is as follows. Catalyzes the phosphorylation of the position 2 hydroxy group of 4-diphosphocytidyl-2C-methyl-D-erythritol. This Shewanella frigidimarina (strain NCIMB 400) protein is 4-diphosphocytidyl-2-C-methyl-D-erythritol kinase.